A 378-amino-acid polypeptide reads, in one-letter code: Serpin B6 (378 aa).

M1 carries the N-acetylmethionine modification. The residue at position 196 (K196) is an N6-acetyllysine.

The protein belongs to the serpin family. Ov-serpin subfamily. In terms of assembly, forms a complex with the monomeric form of beta-tryptase. As to expression, brain.

The protein resides in the cytoplasm. Its function is as follows. Inhibitor of cathepsin G, kallikrein-8 and thrombin. May play an important role in the inner ear in the protection against leakage of lysosomal content during stress. May be involved in the regulation of serine proteinases present in the brain or extravasated from the blood. The sequence is that of Serpin B6 (SERPINB6) from Bos taurus (Bovine).